The sequence spans 284 residues: Nucleotide-binding protein Sputcn32_0712 (284 aa).

Residue Gly-8–Ser-15 coordinates ATP. Position 56–59 (Asp-56–Asn-59) interacts with GTP.

This sequence belongs to the RapZ-like family.

In terms of biological role, displays ATPase and GTPase activities. The sequence is that of Nucleotide-binding protein Sputcn32_0712 from Shewanella putrefaciens (strain CN-32 / ATCC BAA-453).